The following is a 789-amino-acid chain: MVSFSAPKKRRRGRSQRSMSSLNSLPVPNVGLLPGNSNFVSSSASSSGRFNVEVVNGSNQTVKSYPGIGDEIITINKEATTEALLALTAGFPADSLTEEEIEFGVVPIVGGIEQVNYILIRNHIISKWRENISSWVTKEMFLNSIPKHCSSLLDSAYNYLVTHGYINFGIAQAIKDKFPAQSSKSSVIIVGAGLSGLAAARQLMRFGFKVTVLEGRKRPGGRVYTKKMEANRVGAAADLGGSVLTGTLGNPLGIIARQLGSSLYKVRDKCPLYRVDGKPVDPDVDIKVEVAFNQLLDKASKLRQLMGDVSMDVSLGAALETFRQVSGNDVATEEMGLFNWHLANLEYANAGLVSKLSLAFWDQDDPYDMGGDHCFLPGGNGRLVQALAENVPILYEKTVQTIRYGSNGVKVTAGNQVYEGDMVLCTVPLGVLKNGSIKFVPELPQRKLDCIKRLGFGLLNKVAMLFPYVFWSTDLDTFGHLTEDPNYRGEFFLFYSYAPVAGGALLIALVAGEAAHKFETMPPTDAVTRVLHILRGIYEPQGINVPDPLQTVCTRWGGDPFSLGSYSNVAVGASGDDYDILAESVGDGRLFFAGEATTRRYPATMHGAFVTGLREAANMAQSAKARGIRKRIDRNPSRNAHSCAILLADLFRDPDLEFGSFCIIFSRRNPDPKSPAILRVTLSEPRKRNEDPKADQHSNKILFQQLQSHFNQQQQIQVYTLLTRQQALDLREVRGGDEKRLYYLCETLGVKLVGRKGLGVGADSVIASIKAERTGRKLPSSSTSGTKSG.

The interval methionine 1 to asparagine 23 is disordered. Residues asparagine 76–lysine 177 enclose the SWIRM domain. Residues serine 195, glutamate 214, arginine 216, arginine 222, and glycine 240 to valine 243 contribute to the FAD site. A Glycyl lysine isopeptide (Lys-Gly) (interchain with G-Cter in SUMO) cross-link involves residue lysine 287. FAD is bound by residues glutamate 595, threonine 604–methionine 605, and glycine 607–glycine 612. Glycyl lysine isopeptide (Lys-Gly) (interchain with G-Cter in SUMO) cross-links involve residues lysine 693 and lysine 770.

It belongs to the flavin monoamine oxidase family. Interacts with HDA6. The cofactor is FAD. In terms of processing, sumoylated at Lys-287, Lys-693 and Lys-770 by SIZ1. Sumoylation alters its activity and the histone H4 acetylation status of FLC locus, promoting FLC expression.

Its function is as follows. Probable histone demethylase that promotes flowering independently of the photoperiod and vernalization pathways by repressing FLOWERING LOCUS C (FLC), a floral repressor that blocks the transition from vegetative to reproductive development. Probably mediates histone H3 'Lys-4' demethylation at FLC locus. Seems to act in partial redundancy with LDL1 and LDL2 to repress FLC expression. Required for histone H4 deacetylation of FLC locus. May be a component of the histone deacetylase complex. Forms a histone deacetylase complex with HDA5, HDA6 and MSI4/FVE that represses FLC gene expression to control flowering time. Required for systemic acquired resistance (SAR) toward pathogenic bacteria (e.g. Pseudomonas syringae pv tomato DC3000 (avrPto)). Together with FLD and MSI4/FVE, contributes to dehydroabietinal-dependent (DA, a diterpenoid tricyclic diterpene) activation of flowering ans SAR. The chain is Protein FLOWERING LOCUS D from Arabidopsis thaliana (Mouse-ear cress).